Here is a 357-residue protein sequence, read N- to C-terminus: MQETSATITAERKHSHVDVCLNRPVCFDGQDTGLDAWRFEHNAAPEIDFAEIDLTAEFLGHAIGMPLMISSMTGGYGDALALNRTLAEAAERFRIPLGVGSMRQALEGNSHRESFSIVRSSAPSVPIFANIGAPEVAAGLSREQLSTLVELIEADGLIVHLNPAQELFQPEGSTNFRGFLDRLHDITATINVPVIAKEVGCGISAPLASKLADAGVKAIDVAGAGGISWQKVEECRYLDRFGNEERFSPSALDEFLNWGIPTAECLTGIAALKEKSPEYGSLAVISSGGIRNGLDVAKSIALGADIAASAQHLLKALRAGTLEETIRTWANDLRAAMFLTGSATTAQLKHAPIYRKP.

12–13 is a substrate binding site; that stretch reads RK. Residues serine 70, 71-73, serine 101, and asparagine 130 each bind FMN; that span reads SMT. 101–103 is a substrate binding site; that stretch reads SMR. Residue glutamine 165 coordinates substrate. Glutamate 166 is a Mg(2+) binding site. FMN contacts are provided by residues lysine 197, 289 to 291, and 310 to 311; these read GIR and AQ.

Belongs to the IPP isomerase type 2 family. Homooctamer. Dimer of tetramers. Requires FMN as cofactor. NADPH is required as a cofactor. Mg(2+) serves as cofactor.

It localises to the cytoplasm. It catalyses the reaction isopentenyl diphosphate = dimethylallyl diphosphate. In terms of biological role, involved in the biosynthesis of isoprenoids. Catalyzes the 1,3-allylic rearrangement of the homoallylic substrate isopentenyl (IPP) to its allylic isomer, dimethylallyl diphosphate (DMAPP). The chain is Isopentenyl-diphosphate delta-isomerase from Chlorobaculum parvum (strain DSM 263 / NCIMB 8327) (Chlorobium vibrioforme subsp. thiosulfatophilum).